Reading from the N-terminus, the 647-residue chain is Threonine--tRNA ligase (647 aa).

The 61-residue stretch at 1–61 (MIKITFPDGA…EEDGSIEIVT (61 aa)) folds into the TGS domain. The catalytic stretch occupies residues 240 to 538 (DHRKLGKELD…LIETYKGAFP (299 aa)). Residues Cys-334, His-385, and His-515 each contribute to the Zn(2+) site.

The protein belongs to the class-II aminoacyl-tRNA synthetase family. As to quaternary structure, homodimer. The cofactor is Zn(2+).

The protein resides in the cytoplasm. It carries out the reaction tRNA(Thr) + L-threonine + ATP = L-threonyl-tRNA(Thr) + AMP + diphosphate + H(+). Its function is as follows. Catalyzes the attachment of threonine to tRNA(Thr) in a two-step reaction: L-threonine is first activated by ATP to form Thr-AMP and then transferred to the acceptor end of tRNA(Thr). Also edits incorrectly charged L-seryl-tRNA(Thr). This is Threonine--tRNA ligase from Streptococcus pyogenes serotype M28 (strain MGAS6180).